A 1036-amino-acid chain; its full sequence is Lethal(2) giant larvae protein homolog 1 (1036 aa).

WD repeat units lie at residues 38 to 71, 78 to 119, 139 to 175, 199 to 233, 239 to 271, 289 to 331, 339 to 373, 395 to 473, 517 to 592, and 601 to 662; these read SALA…FTGL, VTQM…GLSF, VTVV…GQTL, SLQG…EHVF, LESL…GSPP, AINK…ETLV, VIDF…VLDL, TCSA…YKLS, QKVA…RVLI, and TAVA…LRQS. Residue serine 662 is modified to Phosphoserine. Residues 670 to 694 are disordered; the sequence is RVSGKKRATTASSKLQEANAQLAEQ. The span at 678-693 shows a compositional bias: polar residues; sequence TTASSKLQEANAQLAE. WD repeat units follow at residues 722 to 782, 791 to 843, 848 to 901, and 915 to 938; these read VRCL…KEVQ, AIAV…VSAK, LTAH…VHYS, and VFTR…SLSA. Phosphothreonine is present on threonine 957. 3 positions are modified to phosphoserine: serine 964, serine 982, and serine 989. Residues 980-1002 form a disordered region; that stretch reads PESCEGSPSSAHSKRADTMEPPE.

The protein belongs to the WD repeat L(2)GL family. In terms of assembly, associated with nonmuscle myosin II heavy chain. Interacts with PRKCI/aPKC, PARD6B/Par-6 and PARD6A. Interacts with STX4A. Interacts with DCAF1. Interacts with RAB10 (GDP-bound form); the interaction is direct and promotes RAB10 association with membranes and activation through competition with the Rab inhibitor GDI1. Phosphorylated by PRKCI. In terms of tissue distribution, expressed at high level in the testis and at lower level in ovary, brain, spleen and kidney.

It is found in the early endosome membrane. It localises to the golgi apparatus. The protein localises to the trans-Golgi network membrane. The protein resides in the golgi apparatus membrane. Its subcellular location is the cell projection. It is found in the axon. It localises to the cytoplasm. The protein localises to the cytoskeleton. Functionally, cortical cytoskeleton protein found in a complex involved in maintaining cell polarity and epithelial integrity. Involved in the regulation of mitotic spindle orientation, proliferation, differentiation and tissue organization of neuroepithelial cells. Involved in axonogenesis through RAB10 activation thereby regulating vesicular membrane trafficking toward the axonal plasma membrane. The polypeptide is Lethal(2) giant larvae protein homolog 1 (Llgl1) (Rattus norvegicus (Rat)).